Reading from the N-terminus, the 546-residue chain is CTP synthase (546 aa).

The tract at residues 1-266 (MARYIFITGG…DTEVLDVFGL (266 aa)) is amidoligase domain. Ser13 contacts CTP. Residue Ser13 participates in UTP binding. 14–19 (SLGKGL) contributes to the ATP binding site. Tyr54 serves as a coordination point for L-glutamine. ATP is bound at residue Asp71. Residues Asp71 and Glu140 each contribute to the Mg(2+) site. Residues 147 to 149 (DIE), 187 to 192 (KTKPTQ), and Lys223 each bind CTP. Residues 187–192 (KTKPTQ) and Lys223 contribute to the UTP site. The Glutamine amidotransferase type-1 domain maps to 293 to 545 (NIAIVGKYTG…IGAAKERSRL (253 aa)). Ala357 contacts L-glutamine. The active-site Nucleophile; for glutamine hydrolysis is the Cys384. Residues 385 to 388 (FGMQ), Glu408, and Arg473 each bind L-glutamine. Residues His518 and Glu520 contribute to the active site.

It belongs to the CTP synthase family. Homotetramer.

It catalyses the reaction UTP + L-glutamine + ATP + H2O = CTP + L-glutamate + ADP + phosphate + 2 H(+). The enzyme catalyses L-glutamine + H2O = L-glutamate + NH4(+). The catalysed reaction is UTP + NH4(+) + ATP = CTP + ADP + phosphate + 2 H(+). It participates in pyrimidine metabolism; CTP biosynthesis via de novo pathway; CTP from UDP: step 2/2. With respect to regulation, allosterically activated by GTP, when glutamine is the substrate; GTP has no effect on the reaction when ammonia is the substrate. The allosteric effector GTP functions by stabilizing the protein conformation that binds the tetrahedral intermediate(s) formed during glutamine hydrolysis. Inhibited by the product CTP, via allosteric rather than competitive inhibition. Its function is as follows. Catalyzes the ATP-dependent amination of UTP to CTP with either L-glutamine or ammonia as the source of nitrogen. Regulates intracellular CTP levels through interactions with the four ribonucleotide triphosphates. This Phenylobacterium zucineum (strain HLK1) protein is CTP synthase.